The chain runs to 856 residues: Glucans biosynthesis glucosyltransferase H (856 aa).

Helical transmembrane passes span 144 to 164 (ILLV…KGIM), 198 to 218 (ILIL…TALM), 517 to 537 (VFLT…FLVL), 574 to 594 (LFST…ILIW), 608 to 628 (TLSM…RMIF), and 684 to 704 (FLWW…VSVI).

It belongs to the glycosyltransferase 2 family. OpgH subfamily.

The protein localises to the cell inner membrane. It functions in the pathway glycan metabolism; osmoregulated periplasmic glucan (OPG) biosynthesis. Functionally, involved in the biosynthesis of osmoregulated periplasmic glucans (OPGs). In Pseudomonas fluorescens (strain ATCC BAA-477 / NRRL B-23932 / Pf-5), this protein is Glucans biosynthesis glucosyltransferase H.